The following is a 331-amino-acid chain: Pseudouridylate synthase TRUB2, mitochondrial (331 aa).

D98 acts as the Nucleophile in catalysis. Positions 309 to 331 (STGQPWGLKDPSSTLELESCSGQ) are disordered. Polar residues predominate over residues 319-331 (PSSTLELESCSGQ).

This sequence belongs to the pseudouridine synthase TruB family. In terms of assembly, forms a regulatory protein-RNA complex, consisting of RCC1L, NGRN, RPUSD3, RPUSD4, TRUB2, FASTKD2 and 16S mt-rRNA.

The protein resides in the mitochondrion matrix. It carries out the reaction a uridine in mRNA = a pseudouridine in mRNA. It catalyses the reaction uridine(55) in tRNA = pseudouridine(55) in tRNA. Functionally, minor enzyme contributing to the isomerization of uridine to pseudouridine (pseudouridylation) of specific mitochondrial mRNAs (mt-mRNAs) such as COXI and COXIII mt-mRNAs. As a component of a functional protein-RNA module, consisting of RCC1L, NGRN, RPUSD3, RPUSD4, TRUB2, FASTKD2 and 16S mitochondrial ribosomal RNA (16S mt-rRNA), controls 16S mt-rRNA abundance and is required for intra-mitochondrial translation. Also catalyzes pseudouridylation of some tRNAs, including synthesis of pseudouridine(55) from uracil-55, in the psi GC loop of a subset of tRNAs. The chain is Pseudouridylate synthase TRUB2, mitochondrial from Mus musculus (Mouse).